Reading from the N-terminus, the 674-residue chain is DNA mismatch repair protein MutL (674 aa).

It belongs to the DNA mismatch repair MutL/HexB family.

Its function is as follows. This protein is involved in the repair of mismatches in DNA. It is required for dam-dependent methyl-directed DNA mismatch repair. May act as a 'molecular matchmaker', a protein that promotes the formation of a stable complex between two or more DNA-binding proteins in an ATP-dependent manner without itself being part of a final effector complex. The chain is DNA mismatch repair protein MutL from Clostridium perfringens (strain 13 / Type A).